A 515-amino-acid polypeptide reads, in one-letter code: Gamma aminobutyrate transaminase 1, mitochondrial (515 aa).

A mitochondrion-targeting transit peptide spans 1–57 (MAKISRLFGSTVKAAITAQAGFHGKRIPAVSSLQEHIVKSTPARYNSTQACLENDIS). 172–173 (GS) lines the pyridoxal 5'-phosphate pocket. Substrate is bound at residue Tyr-205. Pyridoxal 5'-phosphate is bound at residue Asp-312. Residue Lys-341 participates in substrate binding. The residue at position 341 (Lys-341) is an N6-(pyridoxal phosphate)lysine.

It belongs to the class-III pyridoxal-phosphate-dependent aminotransferase family. As to expression, expressed in leaves, roots, stems, flowers and fruits.

It is found in the mitochondrion. The catalysed reaction is 4-aminobutanoate + pyruvate = succinate semialdehyde + L-alanine. It catalyses the reaction 4-aminobutanoate + glyoxylate = succinate semialdehyde + glycine. Functionally, transaminase that degrades gamma-amino butyric acid (GABA) and uses pyruvate or glyoxylate as amino-group acceptor. Cannot use beta-alanine, ornithine, acetylornithine, serine, glycine, asparagine, glutamine, glutamate, valine, leucine, isoleucine, methionine, phenylalanine, histidine, lysine, arginine, aspartate, threonine, tyrosine, tryptophan, proline, or cysteine as amino donors. Acts predominantly in vegetative tissues. This Solanum lycopersicum (Tomato) protein is Gamma aminobutyrate transaminase 1, mitochondrial (GABA-TP1).